Reading from the N-terminus, the 477-residue chain is RNA pseudouridine synthase 6, chloroplastic (477 aa).

The N-terminal 52 residues, 1 to 52 (MPKAAASLASLLPQLWHRPVQPPPFLHRALSSSSPLLRRHRAALHSPAAPLS), are a transit peptide targeting the chloroplast. The S4 RNA-binding domain occupies 98 to 205 (EVAVDFISRS…FPRCYEIDWK (108 aa)). Aspartate 258 is a catalytic residue.

It belongs to the pseudouridine synthase RluA family.

It localises to the plastid. Its subcellular location is the chloroplast. The enzyme catalyses a uridine in RNA = a pseudouridine in RNA. The protein is RNA pseudouridine synthase 6, chloroplastic of Oryza sativa subsp. japonica (Rice).